Reading from the N-terminus, the 324-residue chain is MAELEFEKPVVELRNKIRELKDYTKNSQMDFSEEIRILEEKLENLEEDIYGNLKVWDRVQIARHAERPTTLDYIEHLFTDFFECHGDRLFGDDAAIVGGIAKYKGMPVTVIGHQRGKDTKENIRRNFGMPHPEGYRKALRLMKQAEKFNRPIICFIDTKGAYPGKAAEERGQSEAIARNLFEMAGLTVPVICIVIGEGGSGGALGLGVGDYIHMLENSTYSVITPEGAAAILWKDAGKAKEAAEAMKITAADLKELGVIDEIIPEARGGAHRNILKQSENIDLMIQKTFQQLNGISKDELIEKRYEKYMKIGQVSFSNASIWIK.

The region spanning 37–291 (ILEEKLENLE…DLMIQKTFQQ (255 aa)) is the CoA carboxyltransferase C-terminal domain.

This sequence belongs to the AccA family. In terms of assembly, acetyl-CoA carboxylase is a heterohexamer composed of biotin carboxyl carrier protein (AccB), biotin carboxylase (AccC) and two subunits each of ACCase subunit alpha (AccA) and ACCase subunit beta (AccD).

The protein resides in the cytoplasm. It carries out the reaction N(6)-carboxybiotinyl-L-lysyl-[protein] + acetyl-CoA = N(6)-biotinyl-L-lysyl-[protein] + malonyl-CoA. Its pathway is lipid metabolism; malonyl-CoA biosynthesis; malonyl-CoA from acetyl-CoA: step 1/1. Functionally, component of the acetyl coenzyme A carboxylase (ACC) complex. First, biotin carboxylase catalyzes the carboxylation of biotin on its carrier protein (BCCP) and then the CO(2) group is transferred by the carboxyltransferase to acetyl-CoA to form malonyl-CoA. In Bacillus cereus (strain ATCC 14579 / DSM 31 / CCUG 7414 / JCM 2152 / NBRC 15305 / NCIMB 9373 / NCTC 2599 / NRRL B-3711), this protein is Acetyl-coenzyme A carboxylase carboxyl transferase subunit alpha.